We begin with the raw amino-acid sequence, 951 residues long: Leucine-rich repeat-containing G-protein coupled receptor 4 (951 aa).

An N-terminal signal peptide occupies residues 1-24; sequence MPGPLRLLCFFALGLLGSAGPSGA. In terms of domain architecture, LRRNT spans 25 to 57; that stretch reads APPLCAAPCSCDGDRRVDCSGKGLTAVPEGLSA. Topologically, residues 25–544 are extracellular; it reads APPLCAAPCS…LLGSWMIRLT (520 aa). 2 cysteine pairs are disulfide-bonded: C29–C35 and C33–C43. LRR repeat units follow at residues 58 to 79, 82 to 103, 106 to 127, 130 to 151, 154 to 177, 178 to 199, 202 to 223, 226 to 247, 249 to 270, 273 to 294, 320 to 341, 344 to 365, 366 to 387, 390 to 411, and 414 to 435; these read FTQA…AFKN, FLEE…ALSG, ELKV…AIRG, ALQS…SFEG, QLRH…SNLP, TLQA…AFTN, SLVV…CFDG, NLET…IKAL, SLKE…AFAG, LLRT…AFHN, HLES…LCQN, MLRT…NGCR, ALEE…TFQG, SLRI…AFAK, and TITN…GLNG. N68 carries N-linked (GlcNAc...) asparagine glycosylation. N-linked (GlcNAc...) asparagine glycans are attached at residues N188 and N199. The N-linked (GlcNAc...) asparagine glycan is linked to N294. An intrachain disulfide couples C339 to C364. 2 cysteine pairs are disulfide-bonded: C470–C522 and C471–C476. The segment at 487–512 is disordered; the sequence is NSPQDHSVTKEKGATDAANATSTAES. Positions 501–510 are enriched in low complexity; that stretch reads TDAANATSTA. Residue N505 is glycosylated (N-linked (GlcNAc...) asparagine). A helical transmembrane segment spans residues 545–565; it reads VWFIFLVALLFNLLVILTVFA. Residues 566–575 lie on the Cytoplasmic side of the membrane; that stretch reads SCSSLPASKL. A helical membrane pass occupies residues 576–596; sequence FIGLISVSNLLMGIYTGILTF. The Extracellular segment spans residues 597-619; it reads LDAVSWGRFAEFGIWWETGSGCK. Cysteines 618 and 693 form a disulfide. Residues 620–640 traverse the membrane as a helical segment; it reads VAGSLAVFSSESAVFLLTLAA. The Cytoplasmic portion of the chain corresponds to 641–661; that stretch reads VERSVFAKDVMKNGKSSHLRQ. The helical transmembrane segment at 662-682 threads the bilayer; that stretch reads FQVAALVALLGAAIAGCFPLF. At 683–703 the chain is on the extracellular side; the sequence is HGGQYSASPLCLPFPTGETPS. Residues 704–724 traverse the membrane as a helical segment; sequence LGFTVTLVLLNSLAFLLMAII. Residues 725–756 lie on the Cytoplasmic side of the membrane; sequence YTKLYCNLEKEDPSENSQSSMIKHVAWLIFTN. The chain crosses the membrane as a helical span at residues 757–777; that stretch reads CIFFCPVAFFSFAPLITAISI. The Extracellular segment spans residues 778–783; it reads SPEIMK. Residues 784–804 traverse the membrane as a helical segment; that stretch reads SVTLIFFPLPACLNPVLYVFF. The Cytoplasmic segment spans residues 805-951; it reads NPKFKDDWKL…YAYNLPRVRD (147 aa). S920 is subject to Phosphoserine.

This sequence belongs to the G-protein coupled receptor 1 family.

It localises to the cell membrane. Its function is as follows. Receptor for R-spondins that potentiates the canonical Wnt signaling pathway and is involved in the formation of various organs. Upon binding to R-spondins (RSPO1, RSPO2, RSPO3 or RSPO4), associates with phosphorylated LRP6 and frizzled receptors that are activated by extracellular Wnt receptors, triggering the canonical Wnt signaling pathway to increase expression of target genes. In contrast to classical G-protein coupled receptors, does not activate heterotrimeric G-proteins to transduce the signal. Its function as activator of the Wnt signaling pathway is required for the development of various organs, including liver, kidney, intestine, bone, reproductive tract and eye. May also act as a receptor for norrin (NDP), such results however require additional confirmation in vivo. Required during spermatogenesis to activate the Wnt signaling pathway in peritubular myoid cells. Required for the maintenance of intestinal stem cells and Paneth cell differentiation in postnatal intestinal crypts. Acts as a regulator of bone formation and remodeling. Involved in kidney development; required for maintaining the ureteric bud in an undifferentiated state. Involved in the development of the anterior segment of the eye. Required during erythropoiesis. Also acts as a negative regulator of innate immunity by inhibiting TLR2/TLR4 associated pattern-recognition and pro-inflammatory cytokine production. Plays an important role in regulating the circadian rhythms of plasma lipids, partially through regulating the rhythmic expression of MTTP. Required for proper development of GnRH neurons (gonadotropin-releasing hormone expressing neurons) that control the release of reproductive hormones from the pituitary gland. This Mus musculus (Mouse) protein is Leucine-rich repeat-containing G-protein coupled receptor 4 (Lgr4).